Here is a 299-residue protein sequence, read N- to C-terminus: uncharacterized protein (299 aa).

A helical transmembrane segment spans residues 4–20; it reads LFFIFVMLIVLLCGCTS.

The protein resides in the membrane. This is an uncharacterized protein from Methanocaldococcus jannaschii (strain ATCC 43067 / DSM 2661 / JAL-1 / JCM 10045 / NBRC 100440) (Methanococcus jannaschii).